Reading from the N-terminus, the 102-residue chain is Small ribosomal subunit protein uS10 (102 aa).

The protein belongs to the universal ribosomal protein uS10 family. As to quaternary structure, part of the 30S ribosomal subunit.

Involved in the binding of tRNA to the ribosomes. This chain is Small ribosomal subunit protein uS10, found in Streptococcus pneumoniae (strain Taiwan19F-14).